A 253-amino-acid chain; its full sequence is MMKSGADLQFPPGFRFHPTDEELVLMYLCRKCASQPIPAPIITELDLYRYDPWDLPDMALYGEKEWYFFSPRDRKYPNGSRPNRAAGTGYWKATGADKPIGRPKPVGIKKALVFYSGKPPNGEKTNWIMHEYRLADVDRSVRKKNSLRLDDWVLCRIYNKKGVIEKRRSDIEDGLKPVTDTCPPESVARLISGSEQAVSPEFTCSNGRLSNALDFPFNYVDAIADNEIVSRLLGGNQMWSTTLDPLVVRQGTF.

Residues 10–160 (FPPGFRFHPT…DWVLCRIYNK (151 aa)) enclose the NAC domain. Residues 106-166 (VGIKKALVFY…IYNKKGVIEK (61 aa)) mediate DNA binding.

In terms of tissue distribution, expressed in germinating seeds, roots, leaf veins, open flowers and silique stalks.

It localises to the nucleus. Functionally, transcriptional activator that positively regulates age-dependent senescence, dark-induced leaf senescence and stress-induced senescence. Regulates leaf senescence through the modulation of the expression of senescence-associated genes SGR1/NYE1, SAG113 and SAUR36/SAG201, which are involved in chlorophyll degradation, and abscisic acid (ABA) and auxin promotion of senescence, respectively. Promotes reactive oxygen species (ROS) production during age-dependent and stress-induced senescence. Positively regulates auxin-mediated responses in roots. Stress-responsive NAC transcription factor involved in ABA-inducible leaf senescence signaling. Required for normal seed development and morphology. The sequence is that of NAC transcription factor 32 from Arabidopsis thaliana (Mouse-ear cress).